The sequence spans 212 residues: Small ribosomal subunit protein uS5 (212 aa).

In terms of domain architecture, S5 DRBM spans 48-111 (LEDEVLDINM…DIAKLNIIDV (64 aa)).

This sequence belongs to the universal ribosomal protein uS5 family. As to quaternary structure, part of the 30S ribosomal subunit. Contacts protein S4.

Its function is as follows. With S4 and S12 plays an important role in translational accuracy. This is Small ribosomal subunit protein uS5 from Haloarcula marismortui (strain ATCC 43049 / DSM 3752 / JCM 8966 / VKM B-1809) (Halobacterium marismortui).